The chain runs to 210 residues: Large ribosomal subunit protein uL3 (210 aa).

The span at 131–140 (NRASHGNSLS) shows a compositional bias: polar residues. The tract at residues 131 to 150 (NRASHGNSLSHRAPGSIGCR) is disordered. Residue Gln-151 is modified to N5-methylglutamine.

The protein belongs to the universal ribosomal protein uL3 family. In terms of assembly, part of the 50S ribosomal subunit. Forms a cluster with proteins L14 and L19. Post-translationally, methylated by PrmB.

One of the primary rRNA binding proteins, it binds directly near the 3'-end of the 23S rRNA, where it nucleates assembly of the 50S subunit. This Acidithiobacillus ferrooxidans (strain ATCC 23270 / DSM 14882 / CIP 104768 / NCIMB 8455) (Ferrobacillus ferrooxidans (strain ATCC 23270)) protein is Large ribosomal subunit protein uL3.